The primary structure comprises 432 residues: Peptidase B (432 aa).

Residues K196 and D201 each coordinate Mn(2+). K208 is an active-site residue. D219, D278, and E280 together coordinate Mn(2+). The active site involves R282.

Belongs to the peptidase M17 family. In terms of assembly, homohexamer. Mn(2+) serves as cofactor.

It localises to the cytoplasm. The enzyme catalyses Release of an N-terminal amino acid, Xaa, from a peptide or arylamide. Xaa is preferably Glu or Asp but may be other amino acids, including Leu, Met, His, Cys and Gln.. Functionally, probably plays an important role in intracellular peptide degradation. The chain is Peptidase B from Yersinia pseudotuberculosis serotype IB (strain PB1/+).